A 968-amino-acid chain; its full sequence is Putative pectinesterase/pectinesterase inhibitor 26 (968 aa).

A helical membrane pass occupies residues 33–53 (IGISVAVLVAIIISSTVTIAI). The segment at 71–230 (LTPAASLKTV…TEFTSNSLAI (160 aa)) is pectinesterase inhibitor 26 A. Asn-101, Asn-158, Asn-219, Asn-295, Asn-352, Asn-400, Asn-464, Asn-541, Asn-559, and Asn-603 each carry an N-linked (GlcNAc...) asparagine glycan. Residues 265–430 (LTPAASLRNV…RKFTSNSLAI (166 aa)) are pectinesterase inhibitor 26 B. The interval 453–614 (PTPSSVLRTV…TEFTSNSLAI (162 aa)) is pectinesterase inhibitor 26 C. Positions 660–954 (HVTVAADGSG…FTVKYFLRGD (295 aa)) are pectinesterase 26. Thr-735 serves as a coordination point for substrate. Residue Asn-737 is glycosylated (N-linked (GlcNAc...) asparagine). Gln-765 serves as a coordination point for substrate. Asp-788 functions as the Proton donor; for pectinesterase activity in the catalytic mechanism. A disulfide bridge connects residues Cys-802 and Cys-822. Residue Asp-809 is the Nucleophile; for pectinesterase activity of the active site. Asn-863 is a glycosylation site (N-linked (GlcNAc...) asparagine). Positions 872 and 874 each coordinate substrate. Asn-900 is a glycosylation site (N-linked (GlcNAc...) asparagine).

It in the N-terminal section; belongs to the PMEI family. The protein in the C-terminal section; belongs to the pectinesterase family. Expressed in flowers.

Its subcellular location is the membrane. The catalysed reaction is [(1-&gt;4)-alpha-D-galacturonosyl methyl ester](n) + n H2O = [(1-&gt;4)-alpha-D-galacturonosyl](n) + n methanol + n H(+). The protein operates within glycan metabolism; pectin degradation; 2-dehydro-3-deoxy-D-gluconate from pectin: step 1/5. In terms of biological role, acts in the modification of cell walls via demethylesterification of cell wall pectin. This chain is Putative pectinesterase/pectinesterase inhibitor 26 (PME26), found in Arabidopsis thaliana (Mouse-ear cress).